The following is a 1028-amino-acid chain: Unconventional myosin-Ic-A (1028 aa).

The residue at position 1 (M1) is an N-acetylmethionine. Residues 12–696 (GVQDFVLLEN…TLFATEDALE (685 aa)) enclose the Myosin motor domain. 105–112 (GESGSGKT) lines the ATP pocket. K348 bears the N6-methyllysine mark. Positions 573–595 (LSKLMEILMSKEPSYVRCIKPND) are actin-binding. 2 IQ domains span residues 699–728 (KQGI…SAIN) and 722–751 (MKHS…AVDV). One can recognise a TH1 domain in the interval 850-1024 (KDNYPQSVPR…NGHLSVVAPR (175 aa)).

This sequence belongs to the TRAFAC class myosin-kinesin ATPase superfamily. Myosin family. Interacts (via its IQ motifs) with calmodulin.

It localises to the cytoplasm. Its subcellular location is the cell membrane. The protein localises to the cell projection. It is found in the stereocilium membrane. Its function is as follows. Myosins are actin-based motor molecules with ATPase activity. Unconventional myosins serve in intracellular movements. Their highly divergent tails are presumed to bind to membranous compartments, which would be moved relative to actin filaments. Involved in egg activation by coupling dynamic actin to membrane. The protein is Unconventional myosin-Ic-A (myo1c-a) of Xenopus laevis (African clawed frog).